An 874-amino-acid chain; its full sequence is Alanine--tRNA ligase (874 aa).

Zn(2+)-binding residues include histidine 562, histidine 566, cysteine 663, and histidine 667.

Belongs to the class-II aminoacyl-tRNA synthetase family. Zn(2+) is required as a cofactor.

The protein resides in the cytoplasm. It catalyses the reaction tRNA(Ala) + L-alanine + ATP = L-alanyl-tRNA(Ala) + AMP + diphosphate. Catalyzes the attachment of alanine to tRNA(Ala) in a two-step reaction: alanine is first activated by ATP to form Ala-AMP and then transferred to the acceptor end of tRNA(Ala). Also edits incorrectly charged Ser-tRNA(Ala) and Gly-tRNA(Ala) via its editing domain. The polypeptide is Alanine--tRNA ligase (Bordetella bronchiseptica (strain ATCC BAA-588 / NCTC 13252 / RB50) (Alcaligenes bronchisepticus)).